A 154-amino-acid polypeptide reads, in one-letter code: Putative nickel-responsive regulator (154 aa).

The Ni(2+) site is built by His95, His106, His108, and Cys114.

Belongs to the transcriptional regulatory CopG/NikR family. Requires Ni(2+) as cofactor.

In terms of biological role, transcriptional regulator. This chain is Putative nickel-responsive regulator, found in Caldanaerobacter subterraneus subsp. tengcongensis (strain DSM 15242 / JCM 11007 / NBRC 100824 / MB4) (Thermoanaerobacter tengcongensis).